A 295-amino-acid chain; its full sequence is Glycine N-methyltransferase (295 aa).

N-acetylvaline is present on valine 2. 2 residues coordinate (6S)-5-methyl-5,6,7,8-tetrahydrofolate: serine 4 and tyrosine 6. Serine 10 bears the Phosphoserine mark. Tyrosine 22, tryptophan 31, tyrosine 34, and arginine 41 together coordinate S-adenosyl-L-methionine. Tyrosine 34 carries the post-translational modification Phosphotyrosine. The residue at position 46 (lysine 46) is an N6-succinyllysine. Residues alanine 65, 86 to 88 (DAS), 117 to 118 (NW), 139 to 142 (LGNS), and arginine 178 each bind S-adenosyl-L-methionine. N6-succinyllysine is present on residues lysine 193, lysine 198, and lysine 203. Histidine 217 lines the (6S)-5-methyl-5,6,7,8-tetrahydrofolate pocket. S-adenosyl-L-methionine is bound at residue tyrosine 223. A (6S)-5-methyl-5,6,7,8-tetrahydrofolate-binding site is contributed by arginine 242.

This sequence belongs to the class I-like SAM-binding methyltransferase superfamily. Glycine N-methyltransferase family. In terms of assembly, homotetramer. As to expression, expressed only in liver, pancreas, and prostate.

It localises to the cytoplasm. It carries out the reaction glycine + S-adenosyl-L-methionine = sarcosine + S-adenosyl-L-homocysteine + H(+). Inhibited by 5-methyltetrahydrofolate monoglutamate and by 5-methyltetrahydrofolate pentaglutamate, inhibition is much more effective by the pentaglutamate form than by the monoglutamate form. Two molecules of 5-methyltetrahydrofolate are bound per tetramer. The binding sites are localized between subunits. Inhibitor binding may preclude movements of the polypeptide chain that are necessary for enzyme activity. In terms of biological role, catalyzes the methylation of glycine by using S-adenosylmethionine (AdoMet) to form N-methylglycine (sarcosine) with the concomitant production of S-adenosylhomocysteine (AdoHcy), a reaction regulated by the binding of 5-methyltetrahydrofolate. Plays an important role in the regulation of methyl group metabolism by regulating the ratio between S-adenosyl-L-methionine and S-adenosyl-L-homocysteine. The polypeptide is Glycine N-methyltransferase (Homo sapiens (Human)).